Reading from the N-terminus, the 146-residue chain is Small ribosomal subunit protein bS6 (146 aa).

The disordered stretch occupies residues 106–146; sequence QAAATQRAAERRAQREAERNAAQAQSSASNQARTAATTSGK. Residues 113–124 show a composition bias toward basic and acidic residues; the sequence is AAERRAQREAER. Residues 125–146 show a composition bias toward low complexity; sequence NAAQAQSSASNQARTAATTSGK.

The protein belongs to the bacterial ribosomal protein bS6 family.

Binds together with bS18 to 16S ribosomal RNA. The polypeptide is Small ribosomal subunit protein bS6 (Oenococcus oeni (strain ATCC BAA-331 / PSU-1)).